A 119-amino-acid polypeptide reads, in one-letter code: Large ribosomal subunit protein uL18 (119 aa).

This sequence belongs to the universal ribosomal protein uL18 family. Part of the 50S ribosomal subunit; part of the 5S rRNA/L5/L18/L25 subcomplex. Contacts the 5S and 23S rRNAs.

Functionally, this is one of the proteins that bind and probably mediate the attachment of the 5S RNA into the large ribosomal subunit, where it forms part of the central protuberance. The chain is Large ribosomal subunit protein uL18 from Cupriavidus necator (strain ATCC 17699 / DSM 428 / KCTC 22496 / NCIMB 10442 / H16 / Stanier 337) (Ralstonia eutropha).